The chain runs to 545 residues: MEGTGEMREVGRETLHGGVVQSVSETDEYKEKTIDSEKDGQFRVQPRWRKFLAHVGPGALVAIGFLDPSNLETDMQAGADFKYELLWVILVGMVFALLIQTLAANLGVKTGRHLAELCREEYPHYVNIFLWIIAELAVISDDIPEVLGTAFAFNILLKIPVWAGVILTVFSTLLLLGVQRFGARKLEFIIAAFMFTMAACFFGELSYLRPSAGEVVKGMFVPSLQGKGAAANAIALFGAIITPYNLFLHSALVLSRKTPRSDKSIRAACRYFLIECSLAFIVAFLINVSVVVVAGSICNANNLSPADANTCGDLTLQSTPLLLRNVLGRSSSVVYAVALLASGQSTTISCTFAGQVIMQGFLDMKMKNWVRNLITRVIAIAPSLIVSIVSGPSGAGKLIILSSMILSFELPFALIPLLKFCNSSKKVGPLKESIYTVVIAWILSFALIVVNTYFLVWTYVDWLVHNNLPKYANGLISVVVFALMAAYLVAVVYLTFRKDTVATYVPVPERAQAQVEAGGTPVVDASAADEDQPAPYRKDLADASM.

The next 12 helical transmembrane spans lie at 51–71 (FLAHVGPGALVAIGFLDPSNL), 84–104 (ELLWVILVGMVFALLIQTLAA), 128–148 (IFLWIIAELAVISDDIPEVLG), 155–175 (ILLKIPVWAGVILTVFSTLLL), 188–208 (FIIAAFMFTMAACFFGELSYL), 234–254 (IALFGAIITPYNLFLHSALVL), 278–298 (LAFIVAFLINVSVVVVAGSIC), 333–353 (VVYAVALLASGQSTTISCTFA), 373–395 (LITRVIAIAPSLIVSIVSGPSGA), 398–418 (LIILSSMILSFELPFALIPLL), 437–457 (VVIAWILSFALIVVNTYFLVW), and 474–494 (GLISVVVFALMAAYLVAVVYL). The interval 516–545 (EAGGTPVVDASAADEDQPAPYRKDLADASM) is disordered. Over residues 536 to 545 (YRKDLADASM) the composition is skewed to basic and acidic residues.

It belongs to the NRAMP (TC 2.A.55) family. In terms of tissue distribution, expressed at low levels in roots.

The protein resides in the cell membrane. Functionally, metal transporter that transports the trivalent cation aluminum (Al(3+)), but does not seem to transport divalent cations such as iron (Fe(2+)), manganese (Mg(2+)) or Cadmium (Cd(2+)). Involved in Al tolerance by taking up Al in root cells, where it is detoxified by chelation with organic acid anions and sequestration into the vacuoles. This Oryza sativa subsp. japonica (Rice) protein is Metal transporter NRAT1 (NRAT1).